Consider the following 135-residue polypeptide: Congerin-1 (135 aa).

An N-acetylserine modification is found at Ser-1. In terms of domain architecture, Galectin spans 3-135 (GLQVKNFDFT…GDARLTLVKE (133 aa)). 70 to 76 (WETEQRS) is a binding site for a beta-D-galactoside.

In terms of assembly, homodimer.

In terms of biological role, this protein binds beta-galactoside. Its physiological function is not yet known. In Conger myriaster (Conger eel), this protein is Congerin-1.